The sequence spans 350 residues: 3-isopropylmalate dehydrogenase (350 aa).

Position 76–87 (76–87 (GPKWDNAPKRPE)) interacts with NAD(+). The substrate site is built by R94, R104, R132, and D217. D217, D241, and D245 together coordinate Mg(2+). Residue 275 to 287 (GSAPDIANQNIAN) coordinates NAD(+).

This sequence belongs to the isocitrate and isopropylmalate dehydrogenases family. LeuB type 1 subfamily. Homodimer. It depends on Mg(2+) as a cofactor. The cofactor is Mn(2+).

The protein localises to the cytoplasm. The catalysed reaction is (2R,3S)-3-isopropylmalate + NAD(+) = 4-methyl-2-oxopentanoate + CO2 + NADH. It functions in the pathway amino-acid biosynthesis; L-leucine biosynthesis; L-leucine from 3-methyl-2-oxobutanoate: step 3/4. Catalyzes the oxidation of 3-carboxy-2-hydroxy-4-methylpentanoate (3-isopropylmalate) to 3-carboxy-4-methyl-2-oxopentanoate. The product decarboxylates to 4-methyl-2 oxopentanoate. This Listeria innocua serovar 6a (strain ATCC BAA-680 / CLIP 11262) protein is 3-isopropylmalate dehydrogenase.